The chain runs to 155 residues: Small ribosomal subunit protein uS17 (155 aa).

Residue Ala2 is modified to N-acetylalanine.

Belongs to the universal ribosomal protein uS17 family.

In Drosophila pseudoobscura pseudoobscura (Fruit fly), this protein is Small ribosomal subunit protein uS17.